A 583-amino-acid polypeptide reads, in one-letter code: Threonine--tRNA ligase (583 aa).

The interval 185–478 (DHRKLGRELD…LVEHYGGAFP (294 aa)) is catalytic. Cys-278, His-329, and His-455 together coordinate Zn(2+).

The protein belongs to the class-II aminoacyl-tRNA synthetase family. As to quaternary structure, homodimer. Requires Zn(2+) as cofactor.

The protein localises to the cytoplasm. It carries out the reaction tRNA(Thr) + L-threonine + ATP = L-threonyl-tRNA(Thr) + AMP + diphosphate + H(+). Functionally, catalyzes the attachment of threonine to tRNA(Thr) in a two-step reaction: L-threonine is first activated by ATP to form Thr-AMP and then transferred to the acceptor end of tRNA(Thr). Also edits incorrectly charged L-seryl-tRNA(Thr). This is Threonine--tRNA ligase from Borrelia hermsii (strain HS1 / DAH).